The sequence spans 350 residues: Probable dual-specificity RNA methyltransferase RlmN (350 aa).

Glu-98 acts as the Proton acceptor in catalysis. A Radical SAM core domain is found at 104 to 334 (HTYGNSVCVS…VTVRRELGGD (231 aa)). An intrachain disulfide couples Cys-111 to Cys-339. Residues Cys-118, Cys-122, and Cys-125 each contribute to the [4Fe-4S] cluster site. S-adenosyl-L-methionine contacts are provided by residues 165 to 166 (GE), Ser-197, 220 to 222 (SLH), and Asn-296. Cys-339 serves as the catalytic S-methylcysteine intermediate.

The protein belongs to the radical SAM superfamily. RlmN family. Requires [4Fe-4S] cluster as cofactor.

It is found in the cytoplasm. It carries out the reaction adenosine(2503) in 23S rRNA + 2 reduced [2Fe-2S]-[ferredoxin] + 2 S-adenosyl-L-methionine = 2-methyladenosine(2503) in 23S rRNA + 5'-deoxyadenosine + L-methionine + 2 oxidized [2Fe-2S]-[ferredoxin] + S-adenosyl-L-homocysteine. The catalysed reaction is adenosine(37) in tRNA + 2 reduced [2Fe-2S]-[ferredoxin] + 2 S-adenosyl-L-methionine = 2-methyladenosine(37) in tRNA + 5'-deoxyadenosine + L-methionine + 2 oxidized [2Fe-2S]-[ferredoxin] + S-adenosyl-L-homocysteine. Specifically methylates position 2 of adenine 2503 in 23S rRNA and position 2 of adenine 37 in tRNAs. This chain is Probable dual-specificity RNA methyltransferase RlmN, found in Desulforamulus reducens (strain ATCC BAA-1160 / DSM 100696 / MI-1) (Desulfotomaculum reducens).